The sequence spans 692 residues: MVAQINLKDVRNIGIMAHIDAGKTTTTERILYYTGRSHKIGEVHDGNAVMDWMEQEQERGITITSAATTCIWKGKKINIIDTPGHVDFTVEVERSLRVLDGVVAVFCAVGGVEPQSETVWRQANKYFIPRVAFINKMDRVGADFDHCLAMIEKRLRANPVAVQIPVGSEAEFAGVIDLIEGEMYAFDDATLGQEVERREVPTEYKERFTAARISLLEKLADFDEELMEKFLDDELISSATIYKALRKATLALELVPVFCGSAFKNKGVQPLLDGVVNYLPSPLDVKPVEGVDKDGVEVSRKADPSEKFAGLVFKLMSDSFVENLAFIRVYSGTLKQGDKVFNPIKGKQEKIGKLLRLHANKREEVKEIVAGDIGAVVGLKFTTTGDTLCEKEAQIILESMEFPDPVIGVAIEPSSKADEKKLTESLAKIALEDPSFVVSQNEDTGQTIISGMGELHLEIIVYRLLNEFKVAARVGTPQVSYKESIQRSHSAEGLFEQPTGSSNQFAKVVLEIEPLERGAGIEFVCEVDEKQIPAEFLGAVERGVVDSLDSGPLVGYPVTDVRVRLVGGAYHEEDSTEMAFGVSASIAVRKAASEADSVLLEPIMSLEVITPDEYLGDAIGDLNKKRAKVVGVEVEGDLQKLLAHVPLSEMFGYSTSLRSATQGRANFTMQFLAYDVVPANKAETIIKKIRGI.

The region spanning 8-283 is the tr-type G domain; that stretch reads KDVRNIGIMA…GVVNYLPSPL (276 aa). Residues 17–24, 81–85, and 135–138 each bind GTP; these read AHIDAGKT, DTPGH, and NKMD.

Belongs to the TRAFAC class translation factor GTPase superfamily. Classic translation factor GTPase family. EF-G/EF-2 subfamily.

It is found in the cytoplasm. In terms of biological role, catalyzes the GTP-dependent ribosomal translocation step during translation elongation. During this step, the ribosome changes from the pre-translocational (PRE) to the post-translocational (POST) state as the newly formed A-site-bound peptidyl-tRNA and P-site-bound deacylated tRNA move to the P and E sites, respectively. Catalyzes the coordinated movement of the two tRNA molecules, the mRNA and conformational changes in the ribosome. The chain is Elongation factor G 2 from Desulfotalea psychrophila (strain LSv54 / DSM 12343).